We begin with the raw amino-acid sequence, 460 residues long: UDP-N-acetylmuramoylalanine--D-glutamate ligase (460 aa).

Residue 120 to 126 coordinates ATP; sequence GSNGKTT.

It belongs to the MurCDEF family.

Its subcellular location is the cytoplasm. The enzyme catalyses UDP-N-acetyl-alpha-D-muramoyl-L-alanine + D-glutamate + ATP = UDP-N-acetyl-alpha-D-muramoyl-L-alanyl-D-glutamate + ADP + phosphate + H(+). Its pathway is cell wall biogenesis; peptidoglycan biosynthesis. In terms of biological role, cell wall formation. Catalyzes the addition of glutamate to the nucleotide precursor UDP-N-acetylmuramoyl-L-alanine (UMA). This chain is UDP-N-acetylmuramoylalanine--D-glutamate ligase, found in Lactobacillus delbrueckii subsp. bulgaricus (strain ATCC 11842 / DSM 20081 / BCRC 10696 / JCM 1002 / NBRC 13953 / NCIMB 11778 / NCTC 12712 / WDCM 00102 / Lb 14).